A 130-amino-acid polypeptide reads, in one-letter code: Flagellar assembly factor FliW (130 aa).

It belongs to the FliW family. Interacts with translational regulator CsrA and flagellin(s).

It localises to the cytoplasm. In terms of biological role, acts as an anti-CsrA protein, binds CsrA and prevents it from repressing translation of its target genes, one of which is flagellin. Binds to flagellin and participates in the assembly of the flagellum. This Borreliella burgdorferi (strain ATCC 35210 / DSM 4680 / CIP 102532 / B31) (Borrelia burgdorferi) protein is Flagellar assembly factor FliW.